The primary structure comprises 89 residues: Calsenilin isoform 4 (89 aa).

Positions 27–57 (SSRDAEDQGSREGIGWQPPGRSWAHTTEQEG) are disordered.

In terms of tissue distribution, isoform 1 or isoform 4 (T+ forms) are expressed at equal levels with isoform 2 or isoform 3 (T- forms) in brain.

In terms of biological role, unknown for isoform 4. Csen is involved in calcium-dependent transcriptional repression, regulation of potassium channels, and perhaps in processing of PSEN2 and apoptosis. The sequence is that of Calsenilin isoform 4 (Kcnip3) from Mus musculus (Mouse).